The sequence spans 215 residues: Jasmonate monooxygenase ABM (215 aa).

The ABM domain maps to 2-90 (FAVIFETRPQ…GVLEDYHLRV (89 aa)).

Its subcellular location is the endoplasmic reticulum. It is found in the secreted. It catalyses the reaction jasmonate + NADPH + O2 + H(+) = (1R,2R)-12-hydroxyjasmonate + NADP(+) + H2O. Its function is as follows. Monooxygenase that converts the endogenous (and likely the host) jasmonate (JA) to its hydroxylated derivative 12-hydroxyjasmonate (12OH-JA), also known as tuberonic acid, a compound that attenuates or disables jasmonate-based host innate immunity and which is essential for proper initiation and elaboration of the blast disease in rice. ABM, together with a polyketide synthase MGG_04775 and the esterase MGG_04774, share the secondary metabolism gene cluster with ABC transporter ABC3, and therefore may also be involved in the synthesis of other important metabolites such as the ABC3 transporter efflux substrate (ATS) and/or additional polyketides. The chain is Jasmonate monooxygenase ABM from Pyricularia oryzae (strain 70-15 / ATCC MYA-4617 / FGSC 8958) (Rice blast fungus).